We begin with the raw amino-acid sequence, 332 residues long: Leucine carboxyl methyltransferase 1 (332 aa).

Residues R71, G96, D120, 169–170 (DL), and E196 each bind S-adenosyl-L-methionine.

This sequence belongs to the methyltransferase superfamily. LCMT family.

It catalyses the reaction [phosphatase 2A protein]-C-terminal L-leucine + S-adenosyl-L-methionine = [phosphatase 2A protein]-C-terminal L-leucine methyl ester + S-adenosyl-L-homocysteine. Functionally, methylates the carboxyl group of the C-terminal leucine residue of protein phosphatase 2A catalytic subunits to form alpha-leucine ester residues. This chain is Leucine carboxyl methyltransferase 1 (Lcmt1), found in Rattus norvegicus (Rat).